The chain runs to 492 residues: Aerolysin (492 aa).

An N-terminal signal peptide occupies residues 1-21 (MKALKITGLSLIISATLAAQT). 2 cysteine pairs are disulfide-bonded: Cys42–Cys98 and Cys182–Cys187. Residues 68–84 (WQISGLANNWVILGPGY) are interaction with host N-linked glycan. A part of the transmembrane beta-barrel after proteolytic activation of the toxin and insertion into the host membrane region spans residues 256-288 (YGLSEKVSTKNKFKWPLVGETEVSIEIAANQSW). Residues 346–355 (RWGGNAWHTH) form an interaction with glycans from host GPI-anchor region. The propeptide occupies 446–492 (GSDSKVRRTRSVDGANTGLKLDIPLDAQELAELGFENVTLSVTPARN).

The protein belongs to the aerolysin family. Homodimer in solution; homoheptamer in the host membrane. After binding to GPI-anchored proteins in target membranes and proteolytic removal of the C-terminal propeptide, the protein assembles into a heptameric pre-pore complex. A further conformation change leads to insertion into the host membrane. Post-translationally, proteolytic cleavage and subsequent release of the propeptide trigger a major conformation change, leading to the formation of a heptameric pre-pore that then inserts into the host membrane.

It is found in the secreted. The protein localises to the host cell membrane. Its function is as follows. Secreted, cytolytic toxin that forms pores in host membranes after proteolytic removal of a C-terminal propeptide, leading to destruction of the membrane permeability barrier and cell death. The pores are formed by transmembrane beta-strands and are approximately 3 nm in diameter. The chain is Aerolysin (aerA) from Aeromonas enteropelogenes (Aeromonas trota).